Consider the following 265-residue polypeptide: Phosphate import ATP-binding protein PstB 2 (265 aa).

Positions 13–260 constitute an ABC transporter domain; that stretch reads FRTENLNVYY…PTKQATRDYV (248 aa). 45-52 is a binding site for ATP; the sequence is GPSGCGKS.

It belongs to the ABC transporter superfamily. Phosphate importer (TC 3.A.1.7) family. The complex is composed of two ATP-binding proteins (PstB), two transmembrane proteins (PstC and PstA) and a solute-binding protein (PstS).

It is found in the cell inner membrane. The catalysed reaction is phosphate(out) + ATP + H2O = ADP + 2 phosphate(in) + H(+). Part of the ABC transporter complex PstSACB involved in phosphate import. Responsible for energy coupling to the transport system. This chain is Phosphate import ATP-binding protein PstB 2, found in Synechococcus sp. (strain JA-3-3Ab) (Cyanobacteria bacterium Yellowstone A-Prime).